The primary structure comprises 262 residues: Adenosylcobinamide-GDP ribazoletransferase (262 aa).

8 helical membrane passes run 4–21 (AWSG…IPIR), 37–57 (AFPL…FIFS), 62–82 (LSPL…AGGL), 112–132 (VGAF…LFVF), 141–161 (IFLI…LLIY), 181–201 (YDAH…CAIH), 202–222 (FSVW…VFVA), and 236–256 (DALG…IWLL).

The protein belongs to the CobS family. The cofactor is Mg(2+).

Its subcellular location is the cell membrane. It catalyses the reaction alpha-ribazole + adenosylcob(III)inamide-GDP = adenosylcob(III)alamin + GMP + H(+). The catalysed reaction is alpha-ribazole 5'-phosphate + adenosylcob(III)inamide-GDP = adenosylcob(III)alamin 5'-phosphate + GMP + H(+). It functions in the pathway cofactor biosynthesis; adenosylcobalamin biosynthesis; adenosylcobalamin from cob(II)yrinate a,c-diamide: step 7/7. Joins adenosylcobinamide-GDP and alpha-ribazole to generate adenosylcobalamin (Ado-cobalamin). Also synthesizes adenosylcobalamin 5'-phosphate from adenosylcobinamide-GDP and alpha-ribazole 5'-phosphate. The polypeptide is Adenosylcobinamide-GDP ribazoletransferase (Geobacillus sp. (strain WCH70)).